The sequence spans 223 residues: Probable chemoreceptor glutamine deamidase CheD (223 aa).

Residues 189–223 (QTASAKAHTPPQIERFSAPAKPRFERFTRPSTATS) form a disordered region.

This sequence belongs to the CheD family.

The enzyme catalyses L-glutaminyl-[protein] + H2O = L-glutamyl-[protein] + NH4(+). Its function is as follows. Probably deamidates glutamine residues to glutamate on methyl-accepting chemotaxis receptors (MCPs), playing an important role in chemotaxis. The polypeptide is Probable chemoreceptor glutamine deamidase CheD (Bordetella petrii (strain ATCC BAA-461 / DSM 12804 / CCUG 43448)).